The chain runs to 156 residues: SsrA-binding protein (156 aa).

Positions 135–156 (HALRERQDRREADRAMSERKDR) are disordered.

Belongs to the SmpB family.

The protein localises to the cytoplasm. Required for rescue of stalled ribosomes mediated by trans-translation. Binds to transfer-messenger RNA (tmRNA), required for stable association of tmRNA with ribosomes. tmRNA and SmpB together mimic tRNA shape, replacing the anticodon stem-loop with SmpB. tmRNA is encoded by the ssrA gene; the 2 termini fold to resemble tRNA(Ala) and it encodes a 'tag peptide', a short internal open reading frame. During trans-translation Ala-aminoacylated tmRNA acts like a tRNA, entering the A-site of stalled ribosomes, displacing the stalled mRNA. The ribosome then switches to translate the ORF on the tmRNA; the nascent peptide is terminated with the 'tag peptide' encoded by the tmRNA and targeted for degradation. The ribosome is freed to recommence translation, which seems to be the essential function of trans-translation. The polypeptide is SsrA-binding protein (Kineococcus radiotolerans (strain ATCC BAA-149 / DSM 14245 / SRS30216)).